The following is a 373-amino-acid chain: MRFVDEYRAPEQVMQLIEHLRERASHLSYTAERPLRIMEVCGGHTHAIFKFGLDQLLPENVEFIHGPGCPVCVLPMGRIDTCVEIASHPEVIFCTFGDAMRVPGKQGSLLQAKARGADVRIVYSPMDALKLAQENPTRKVVFFGLGFETTMPTTAITLQQAKARDVQNFYFFCQHITLIPTLRSLLEQPDNGIDAFLAPGHVSMVIGTDAYNFIASDFHRPLVVAGFEPLDLLQGVVMLVQQKIAAHSKVENQYRRVVPDAGNLLAQQAIADVFCVNGDSEWRGLGVIESSGVHLTPDYQRFDAEAHFRPAPQQVCDDPRARCGEVLTGKCKPHQCPLFGNTCNPQTAFGALMVSSEGACAAWYQYRQQESEA.

3 residues coordinate Fe cation: C41, C69, and C72.

It belongs to the HypD family. In terms of assembly, monomer. Interacts with HypC. Forms a complex with HypC, or HybG, and HypE. [4Fe-4S] cluster serves as cofactor.

Its pathway is protein modification; [NiFe] hydrogenase maturation. Its function is as follows. Involved in the maturation of [NiFe] hydrogenases. Involved in the biosynthesis of the Fe(CN)(2)CO cofactor. HypD may act as a scaffold on which the Fe(CN)(2)CO cofactor is formed. In complex with HypC, accepts the cyanide ligand generated by HypF and HypE, and also coordinates the carbon monoxide ligand. Required for the formation of all three hydrogenase isoenzymes. The polypeptide is Hydrogenase maturation factor HypD (Escherichia coli (strain K12)).